The sequence spans 211 residues: Guanylate kinase (211 aa).

The 180-residue stretch at 5 to 184 (GLLIVFSGPS…AAERVKRIIE (180 aa)) folds into the Guanylate kinase-like domain. ATP is bound at residue 12–19 (GPSGVGKG).

Belongs to the guanylate kinase family.

The protein resides in the cytoplasm. It catalyses the reaction GMP + ATP = GDP + ADP. Its function is as follows. Essential for recycling GMP and indirectly, cGMP. This Streptococcus pyogenes serotype M1 protein is Guanylate kinase.